We begin with the raw amino-acid sequence, 520 residues long: MSQALPVRDQGRDQGIFAGTLPPAPPKFKWTRLDTYTWAIIAVFALVTRFTGLSSATASGTPVFDEKHYVPQAWDMVRSWINPITGGIESNPGYGLVVHPPLAKQLEALGEWVFGYTPLGWRIMVAIFGTLTIFAIMAIARRLSGSTMVTFIAGILALADGVLLVSSRFGMLDIFLVFFITAAAWALIRDHQQMHQRLNDLLLTNGQITKDFGPRFGFRWWRFTTGVFLGLALSVKWSGLYYIAFFGLTSVFLDLWLRKRYGVRRYVTGTLKNDVIPALGSLVIIPALLYIWSWRAWFASETSVYRHAKTDGTITEDSILQLFPESIAGWIHYHISVLEFHGSLTTSSGHSHPWDSKPWAWLVSGRPILYFSSTDISCDVGGTCRRMIYLFGTPAIWWLTVPVILWALWSFFARRSRGYVVPLVAFAAGFLPWLAAYDRQMYFFYATALVPFTIIMLALACGELWGRGKMTPTGLTRGSMAVVTYISLVVMMFLAFSPLFYGFVIPDYVYESLMWFPSWR.

10 helical membrane passes run 38–58 (WAII…SATA), 119–139 (LGWR…IMAI), 145–165 (GSTM…VLLV), 168–188 (RFGM…WALI), 237–257 (WSGL…DLWL), 274–294 (DVIP…IWSW), 388–408 (IYLF…LWAL), 418–438 (GYVV…AAYD), 441–461 (MYFF…ALAC), and 485–505 (YISL…GFVI).

Belongs to the glycosyltransferase 39 family.

The protein localises to the cell membrane. Its pathway is protein modification; protein glycosylation. In terms of biological role, protein O-mannosyltransferase that catalyzes the transfer of a single mannose residue from a polyprenol phospho-mannosyl lipidic donor to the hydroxyl group of selected serine and threonine residues in acceptor proteins. The sequence is that of Polyprenol-phosphate-mannose--protein mannosyltransferase (pmt) from Corynebacterium glutamicum (strain ATCC 13032 / DSM 20300 / JCM 1318 / BCRC 11384 / CCUG 27702 / LMG 3730 / NBRC 12168 / NCIMB 10025 / NRRL B-2784 / 534).